Reading from the N-terminus, the 627-residue chain is E3 ubiquitin-protein ligase DTX1 (627 aa).

WWE domains follow at residues Gly14–Arg94 and Asn95–Arg171. Disordered stretches follow at residues Gln222–Val254, Pro269–Val327, and Pro368–Asn398. Composition is skewed to pro residues over residues Pro230–Pro248 and Glu275–Pro287. Residues Pro240–Leu243 carry the SH3-binding motif. Over residues Pro296–Ala314 the composition is skewed to polar residues. A compositionally biased stretch (basic residues) spans Arg386–Ser396. Residues Cys418–Lys479 form an RING-type zinc finger.

This sequence belongs to the Deltex family. As to quaternary structure, homodimer. May form a heterodimer with other members of the Deltex family. Interacts with NOTCH1 via its N-terminal region and EIF3F, the interaction is required for NOTCH1 deubiquitination. Interacts with EP300. Forms a heterodimer with BBAP; the heterodimerization leading to an increase of in vitro ubiquitin ligase activity. Interacts with ITCH. In terms of processing, ubiquitinated; undergoes 'Lys-29'-linked polyubiquitination catalyzed by ITCH. In terms of tissue distribution, predominantly expressed in the brain and testis. Weakly expressed in the thymus, spleen and ovary. Predominantly expressed in regions containing post-mitotic differentiating neurons.

The protein resides in the cytoplasm. It is found in the nucleus. The catalysed reaction is S-ubiquitinyl-[E2 ubiquitin-conjugating enzyme]-L-cysteine + [acceptor protein]-L-lysine = [E2 ubiquitin-conjugating enzyme]-L-cysteine + N(6)-ubiquitinyl-[acceptor protein]-L-lysine.. It functions in the pathway protein modification; protein ubiquitination. Functionally, regulator of Notch signaling, a signaling pathway involved in cell-cell communications that regulates a broad spectrum of cell-fate determinations. Mainly acts as a positive regulator of Notch, but it also acts as a negative regulator, depending on the developmental and cell context. Mediates the antineural activity of Notch, possibly by inhibiting the transcriptional activation mediated by MATCH1. Involved in neurogenesis, lymphogenesis and myogenesis, and may also be involved in MZB (Marginal zone B) cell differentiation. Promotes B-cell development at the expense of T-cell development, suggesting that it can antagonize NOTCH1. Functions as an ubiquitin ligase protein in vivo, mediating ubiquitination and promoting degradation of MEKK1, suggesting that it may regulate the Notch pathway via some ubiquitin ligase activity. This Mus musculus (Mouse) protein is E3 ubiquitin-protein ligase DTX1 (Dtx1).